The following is a 715-amino-acid chain: Phosphoribosylformylglycinamidine synthase subunit PurL (715 aa).

Histidine 33 is a catalytic residue. Position 36 (tyrosine 36) interacts with ATP. Glutamate 77 contributes to the Mg(2+) binding site. Substrate is bound by residues 78–81 and arginine 100; that span reads SHNH. Residue histidine 79 is the Proton acceptor of the active site. Residue aspartate 101 coordinates Mg(2+). Glutamine 225 serves as a coordination point for substrate. Residue aspartate 253 coordinates Mg(2+). 297 to 299 contributes to the substrate binding site; sequence ESQ. ATP is bound by residues asparagine 475 and glycine 512. Asparagine 513 contacts Mg(2+). Substrate is bound at residue serine 515.

Belongs to the FGAMS family. As to quaternary structure, monomer. Part of the FGAM synthase complex composed of 1 PurL, 1 PurQ and 2 PurS subunits.

It localises to the cytoplasm. The catalysed reaction is N(2)-formyl-N(1)-(5-phospho-beta-D-ribosyl)glycinamide + L-glutamine + ATP + H2O = 2-formamido-N(1)-(5-O-phospho-beta-D-ribosyl)acetamidine + L-glutamate + ADP + phosphate + H(+). It functions in the pathway purine metabolism; IMP biosynthesis via de novo pathway; 5-amino-1-(5-phospho-D-ribosyl)imidazole from N(2)-formyl-N(1)-(5-phospho-D-ribosyl)glycinamide: step 1/2. Functionally, part of the phosphoribosylformylglycinamidine synthase complex involved in the purines biosynthetic pathway. Catalyzes the ATP-dependent conversion of formylglycinamide ribonucleotide (FGAR) and glutamine to yield formylglycinamidine ribonucleotide (FGAM) and glutamate. The FGAM synthase complex is composed of three subunits. PurQ produces an ammonia molecule by converting glutamine to glutamate. PurL transfers the ammonia molecule to FGAR to form FGAM in an ATP-dependent manner. PurS interacts with PurQ and PurL and is thought to assist in the transfer of the ammonia molecule from PurQ to PurL. The protein is Phosphoribosylformylglycinamidine synthase subunit PurL of Methanosarcina acetivorans (strain ATCC 35395 / DSM 2834 / JCM 12185 / C2A).